Here is a 235-residue protein sequence, read N- to C-terminus: Aspartate/glutamate leucyltransferase (235 aa).

Belongs to the R-transferase family. Bpt subfamily.

Its subcellular location is the cytoplasm. The catalysed reaction is N-terminal L-glutamyl-[protein] + L-leucyl-tRNA(Leu) = N-terminal L-leucyl-L-glutamyl-[protein] + tRNA(Leu) + H(+). It carries out the reaction N-terminal L-aspartyl-[protein] + L-leucyl-tRNA(Leu) = N-terminal L-leucyl-L-aspartyl-[protein] + tRNA(Leu) + H(+). In terms of biological role, functions in the N-end rule pathway of protein degradation where it conjugates Leu from its aminoacyl-tRNA to the N-termini of proteins containing an N-terminal aspartate or glutamate. The polypeptide is Aspartate/glutamate leucyltransferase (Pseudomonas putida (strain ATCC 47054 / DSM 6125 / CFBP 8728 / NCIMB 11950 / KT2440)).